A 435-amino-acid chain; its full sequence is CUB and peptidase domain-containing protein 1 (435 aa).

An N-terminal signal peptide occupies residues 1 to 16 (SGFHLSFSFFRRAVCG). Positions 25–261 (IVGGTVAPIN…LKSWITGKIS (237 aa)) constitute a Peptidase S1 domain. Cysteine 50 and cysteine 66 are oxidised to a cystine. Residues histidine 65 and aspartate 116 each act as charge relay system in the active site. Intrachain disulfides connect cysteine 151–cysteine 218, cysteine 182–cysteine 197, cysteine 208–cysteine 237, and cysteine 322–cysteine 341. The active-site Charge relay system is serine 212. In terms of domain architecture, CUB spans 256–378 (ITGKISRSPA…SGFHLSFSFF (123 aa)).

Belongs to the peptidase S1 family. Component of the acid-insoluble organic matrix of the aragonitic skeleton (at protein level).

The protein resides in the secreted. The polypeptide is CUB and peptidase domain-containing protein 1 (Acropora millepora (Staghorn coral)).